Here is a 126-residue protein sequence, read N- to C-terminus: MRYSLKSGANETREFKFHSEDVRIYCSVIGKEYDGTVPPLMCAKLWPKFKMFQIFKGEAIRLVRTNVELFENLESDIQYCAYLTHKKSEKVKQFDRFIFKLEINKNNKTRMIIEQTFISEDGIYGF.

The sequence is that of Protein VraC from Staphylococcus haemolyticus (strain JCSC1435).